We begin with the raw amino-acid sequence, 140 residues long: Nucleoside diphosphate kinase (140 aa).

Residues K11, F59, R87, T93, R104, and N114 each contribute to the ATP site. H117 (pros-phosphohistidine intermediate) is an active-site residue.

The protein belongs to the NDK family. As to quaternary structure, homotetramer. The cofactor is Mg(2+).

The protein resides in the cytoplasm. It carries out the reaction a 2'-deoxyribonucleoside 5'-diphosphate + ATP = a 2'-deoxyribonucleoside 5'-triphosphate + ADP. It catalyses the reaction a ribonucleoside 5'-diphosphate + ATP = a ribonucleoside 5'-triphosphate + ADP. Functionally, major role in the synthesis of nucleoside triphosphates other than ATP. The ATP gamma phosphate is transferred to the NDP beta phosphate via a ping-pong mechanism, using a phosphorylated active-site intermediate. In Methylobacterium nodulans (strain LMG 21967 / CNCM I-2342 / ORS 2060), this protein is Nucleoside diphosphate kinase.